Here is a 229-residue protein sequence, read N- to C-terminus: Elongation factor 1-delta 1 (229 aa).

The tract at residues 80–109 (ESTAVPSASTPDVADAKAPAADDDDDDDVD) is disordered. Residues 100–109 (ADDDDDDDVD) show a composition bias toward acidic residues.

Belongs to the EF-1-beta/EF-1-delta family. In terms of assembly, EF-1 is composed of 4 subunits: alpha, beta (1B-alpha=beta'), delta (1B-beta), and gamma (1B-gamma).

EF-1-beta and EF-1-beta' stimulate the exchange of GDP bound to EF-1-alpha to GTP. The sequence is that of Elongation factor 1-delta 1 from Oryza sativa subsp. japonica (Rice).